Consider the following 437-residue polypeptide: Phosphatidylserine decarboxylase proenzyme 1, mitochondrial (437 aa).

A mitochondrion-targeting transit peptide spans 1–18 (MLKFHRNVKPQFGAFARY). The Mitochondrial matrix segment spans residues 19–38 (SSLGKHNSRKRVGIIRLAYG). Residues 39–57 (LTGIGLVGLAGFAWAQDRH) traverse the membrane as a helical segment. Topologically, residues 58 to 437 (EKTYQKKGVQ…PLGRVVPSSH (380 aa)) are mitochondrial intermembrane. Catalysis depends on charge relay system; for autoendoproteolytic cleavage activity residues Asp157, His287, and Ser401. The Schiff-base intermediate with substrate; via pyruvic acid; for decarboxylase activity role is filled by Ser401. A Pyruvic acid (Ser); by autocatalysis modification is found at Ser401.

Belongs to the phosphatidylserine decarboxylase family. PSD-B subfamily. Eukaryotic type I sub-subfamily. Heterodimer of a large membrane-associated beta subunit and a small pyruvoyl-containing alpha subunit. Pyruvate is required as a cofactor. Is synthesized initially as an inactive proenzyme. Formation of the active enzyme involves a self-maturation process in which the active site pyruvoyl group is generated from an internal serine residue via an autocatalytic post-translational modification. Two non-identical subunits are generated from the proenzyme in this reaction, and the pyruvate is formed at the N-terminus of the alpha chain, which is derived from the carboxyl end of the proenzyme. The autoendoproteolytic cleavage occurs by a canonical serine protease mechanism, in which the side chain hydroxyl group of the serine supplies its oxygen atom to form the C-terminus of the beta chain, while the remainder of the serine residue undergoes an oxidative deamination to produce ammonia and the pyruvoyl prosthetic group on the alpha chain. During this reaction, the Ser that is part of the protease active site of the proenzyme becomes the pyruvoyl prosthetic group, which constitutes an essential element of the active site of the mature decarboxylase.

The protein localises to the mitochondrion. It localises to the mitochondrion inner membrane. It catalyses the reaction a 1,2-diacyl-sn-glycero-3-phospho-L-serine + H(+) = a 1,2-diacyl-sn-glycero-3-phosphoethanolamine + CO2. The protein operates within phospholipid metabolism; phosphatidylethanolamine biosynthesis; phosphatidylethanolamine from CDP-diacylglycerol: step 2/2. Catalyzes the formation of phosphatidylethanolamine (PtdEtn) from phosphatidylserine (PtdSer). Plays a central role in phospholipid metabolism and in the interorganelle trafficking of phosphatidylserine. Together with psd2 and psd3, responsible for the majority of phosphatidylethanolamine synthesis. This is Phosphatidylserine decarboxylase proenzyme 1, mitochondrial from Schizosaccharomyces pombe (strain 972 / ATCC 24843) (Fission yeast).